The chain runs to 354 residues: MSKYWSNITKDIEPYVCGEQPKNKKIIKLNTNENPYPPSPKVLQAIENAAKDDLRLYPDPNCDALRKTIANYYNLSKEEVFIGNGSDEVLSLSFLTFFNPEETIVFSDISYSFYPVYANLYKLDYKLAKLKEDFSIDINDFKNARGGAVITNPNAPTGVYLSLDSIKQILEDNINNVVMVDEAYIDFGGESSVSLIKDYPNLLVIQTLSKSRSLAGMRIGFALGQKELIEGLNRIKNSFNSYTIDRISSLAAIEAIKDEEYFKECTLKVIKTRNWTINELGKIGFKIIPSKANFIFITHDTYQAEDIFIKLKDENVLVRYFNKDRISNYLRVSIGSKEEMEIFMDKIKKIINKL.

At Lys-210 the chain carries N6-(pyridoxal phosphate)lysine.

Belongs to the class-II pyridoxal-phosphate-dependent aminotransferase family. Histidinol-phosphate aminotransferase subfamily. Homodimer. The cofactor is pyridoxal 5'-phosphate.

It catalyses the reaction L-histidinol phosphate + 2-oxoglutarate = 3-(imidazol-4-yl)-2-oxopropyl phosphate + L-glutamate. The protein operates within amino-acid biosynthesis; L-histidine biosynthesis; L-histidine from 5-phospho-alpha-D-ribose 1-diphosphate: step 7/9. The sequence is that of Histidinol-phosphate aminotransferase from Clostridium botulinum (strain Kyoto / Type A2).